The primary structure comprises 327 residues: Phenylalanine--tRNA ligase alpha subunit (327 aa).

Glu-253 contacts Mg(2+).

This sequence belongs to the class-II aminoacyl-tRNA synthetase family. Phe-tRNA synthetase alpha subunit type 1 subfamily. In terms of assembly, tetramer of two alpha and two beta subunits. Requires Mg(2+) as cofactor.

The protein resides in the cytoplasm. The catalysed reaction is tRNA(Phe) + L-phenylalanine + ATP = L-phenylalanyl-tRNA(Phe) + AMP + diphosphate + H(+). The chain is Phenylalanine--tRNA ligase alpha subunit from Laribacter hongkongensis (strain HLHK9).